Reading from the N-terminus, the 122-residue chain is Large ribosomal subunit protein uL14 (122 aa).

The protein belongs to the universal ribosomal protein uL14 family. As to quaternary structure, part of the 50S ribosomal subunit. Forms a cluster with proteins L3 and L19. In the 70S ribosome, L14 and L19 interact and together make contacts with the 16S rRNA in bridges B5 and B8.

Functionally, binds to 23S rRNA. Forms part of two intersubunit bridges in the 70S ribosome. This chain is Large ribosomal subunit protein uL14, found in Chlorobium phaeobacteroides (strain DSM 266 / SMG 266 / 2430).